The chain runs to 128 residues: Aspartate 1-decarboxylase (128 aa).

The active-site Schiff-base intermediate with substrate; via pyruvic acid is the Ser-25. Ser-25 carries the pyruvic acid (Ser) modification. Position 57 (Thr-57) interacts with substrate. Tyr-58 serves as the catalytic Proton donor. 73 to 75 (GSA) provides a ligand contact to substrate.

It belongs to the PanD family. In terms of assembly, heterooctamer of four alpha and four beta subunits. Pyruvate is required as a cofactor. In terms of processing, is synthesized initially as an inactive proenzyme, which is activated by self-cleavage at a specific serine bond to produce a beta-subunit with a hydroxyl group at its C-terminus and an alpha-subunit with a pyruvoyl group at its N-terminus.

The protein localises to the cytoplasm. The enzyme catalyses L-aspartate + H(+) = beta-alanine + CO2. The protein operates within cofactor biosynthesis; (R)-pantothenate biosynthesis; beta-alanine from L-aspartate: step 1/1. Catalyzes the pyruvoyl-dependent decarboxylation of aspartate to produce beta-alanine. The sequence is that of Aspartate 1-decarboxylase from Burkholderia vietnamiensis (strain G4 / LMG 22486) (Burkholderia cepacia (strain R1808)).